The chain runs to 306 residues: Homoserine O-acetyltransferase (306 aa).

The Acyl-thioester intermediate role is filled by Cys142. 2 residues coordinate substrate: Lys163 and Ser192. The active-site Proton acceptor is the His235. Residue Glu237 is part of the active site. Arg249 contacts substrate.

The protein belongs to the MetA family.

The protein resides in the cytoplasm. It carries out the reaction L-homoserine + acetyl-CoA = O-acetyl-L-homoserine + CoA. The protein operates within amino-acid biosynthesis; L-methionine biosynthesis via de novo pathway; O-acetyl-L-homoserine from L-homoserine: step 1/1. Functionally, transfers an acetyl group from acetyl-CoA to L-homoserine, forming acetyl-L-homoserine. The chain is Homoserine O-acetyltransferase from Brevibacillus brevis (strain 47 / JCM 6285 / NBRC 100599).